The sequence spans 772 residues: Mitochondrial intermediate peptidase (772 aa).

The transit peptide at 1–37 (MLRTIILKAGSNASIPSLSRQNKLLRFFATAGAVSRT) directs the protein to the mitochondrion. His-558 contacts Zn(2+). Glu-559 is a catalytic residue. Zn(2+) contacts are provided by His-562 and His-565.

It belongs to the peptidase M3 family. Requires Zn(2+) as cofactor.

It localises to the mitochondrion matrix. The enzyme catalyses Release of an N-terminal octapeptide as second stage of processing of some proteins imported into the mitochondrion.. With respect to regulation, stimulated by Fe(2+). Its function is as follows. Cleaves proteins, imported into the mitochondrion, to their mature size. While most mitochondrial precursor proteins are processed to the mature form in one step by mitochondrial processing peptidase (MPP), the sequential cleavage by MIP of an octapeptide after initial processing by MPP is a required step for a subgroup of nuclear-encoded precursor proteins destined for the matrix or the inner membrane. Cleaves precursor proteins of respiratory components, including subunits of the electron transport chain and tricarboxylic acid cycle enzymes, and components of the mitochondrial genetic machinery, including ribosomal proteins, translation factors, and proteins required for mitochondrial DNA metabolism. This Saccharomyces cerevisiae (strain YJM789) (Baker's yeast) protein is Mitochondrial intermediate peptidase (OCT1).